Consider the following 344-residue polypeptide: Sorting nexin-16 (344 aa).

The segment covering 1-10 has biased composition (pro residues); the sequence is MATPYVPVPM. Disordered regions lie at residues 1–66 and 81–107; these read MATP…NTSS and ASSI…EDRP. Residues 14-26 are compositionally biased toward polar residues; it reads NSASSFTTNRNQR. Over residues 27 to 40 the composition is skewed to low complexity; sequence SSSFGSVSTSSNSS. A compositionally biased stretch (polar residues) spans 41–66; sequence KGQLEDSNMGNFKQTSVPDQMDNTSS. The PX domain occupies 105 to 218; sequence DRPSTPTILG…EFLCLDDPPG (114 aa). Residues arginine 144, threonine 146, and arginine 184 each coordinate a 1,2-diacyl-sn-glycero-3-phospho-(1D-myo-inositol-3-phosphate). Serine 222 is modified (phosphoserine). A coiled-coil region spans residues 223–278; that stretch reads LEESRAFCETLEETNYRLQKELLEKQKEMESLKKLLSEKQLHIDTLENRIRTLSLE.

Belongs to the sorting nexin family. In terms of assembly, homooligomer. Interacts with EGFR. Detected in placenta, lung, liver,heart and pancreas.

It localises to the early endosome membrane. The protein resides in the late endosome membrane. Its subcellular location is the cytoplasm. The protein localises to the lysosome. In terms of biological role, may be involved in several stages of intracellular trafficking. Plays a role in protein transport from early to late endosomes. Plays a role in protein transport to the lysosome. Promotes degradation of EGFR after EGF signaling. Plays a role in intracellular transport of vesicular stomatitis virus nucleocapsids from the endosome to the cytoplasm. This Homo sapiens (Human) protein is Sorting nexin-16 (SNX16).